Consider the following 696-residue polypeptide: Probable transporter efuK (696 aa).

Residues S603 to F642 are disordered. A compositionally biased stretch (basic and acidic residues) spans A615–N633.

This sequence belongs to the OSBP family.

In terms of biological role, probable transporter; part of the gene cluster that mediates the biosynthesis of enfumafungin, a glycosylated fernene-type triterpenoid with potent antifungal activity, mediated by its interaction with beta-1,3-glucan synthase and the fungal cell wall. Might be involved in transport of enfumafungin to and across organelle membranes. The sequence is that of Probable transporter efuK from Hormonema carpetanum.